Consider the following 325-residue polypeptide: Probable pectate lyase B (325 aa).

A signal peptide spans 1–15 (MRLPTLFMLAAIATA). Ca(2+)-binding residues include aspartate 132, aspartate 161, and aspartate 165. Residue arginine 218 is part of the active site.

The protein belongs to the polysaccharide lyase 1 family. Ca(2+) serves as cofactor.

The protein localises to the secreted. The enzyme catalyses Eliminative cleavage of (1-&gt;4)-alpha-D-galacturonan to give oligosaccharides with 4-deoxy-alpha-D-galact-4-enuronosyl groups at their non-reducing ends.. Pectinolytic enzyme consist of four classes of enzymes: pectin lyase, polygalacturonase, pectin methylesterase and rhamnogalacturonase. Among pectinolytic enzymes, pectin lyase is the most important in depolymerization of pectin, since it cleaves internal glycosidic bonds of highly methylated pectins. Favors pectate, the anion, over pectin, the methyl ester. This Aspergillus terreus (strain NIH 2624 / FGSC A1156) protein is Probable pectate lyase B (plyB).